The sequence spans 106 residues: Urease subunit beta (106 aa).

Belongs to the urease beta subunit family. In terms of assembly, heterotrimer of UreA (gamma), UreB (beta) and UreC (alpha) subunits. Three heterotrimers associate to form the active enzyme.

It is found in the cytoplasm. The enzyme catalyses urea + 2 H2O + H(+) = hydrogencarbonate + 2 NH4(+). It participates in nitrogen metabolism; urea degradation; CO(2) and NH(3) from urea (urease route): step 1/1. This chain is Urease subunit beta, found in Prochlorococcus marinus (strain MIT 9301).